Here is a 590-residue protein sequence, read N- to C-terminus: Aspartate--tRNA(Asp/Asn) ligase (590 aa).

L-aspartate is bound at residue glutamate 173. The tract at residues 197 to 200 is aspartate; the sequence is QIFK. Arginine 219 contributes to the L-aspartate binding site. ATP is bound by residues 219–221 and glutamine 228; that span reads RDE. Histidine 450 provides a ligand contact to L-aspartate. An ATP-binding site is contributed by glutamate 484. Arginine 491 contacts L-aspartate. 536–539 is an ATP binding site; that stretch reads GLDR.

It belongs to the class-II aminoacyl-tRNA synthetase family. Type 1 subfamily. In terms of assembly, homodimer.

It localises to the cytoplasm. It catalyses the reaction tRNA(Asx) + L-aspartate + ATP = L-aspartyl-tRNA(Asx) + AMP + diphosphate. Functionally, aspartyl-tRNA synthetase with relaxed tRNA specificity since it is able to aspartylate not only its cognate tRNA(Asp) but also tRNA(Asn). Reaction proceeds in two steps: L-aspartate is first activated by ATP to form Asp-AMP and then transferred to the acceptor end of tRNA(Asp/Asn). The polypeptide is Aspartate--tRNA(Asp/Asn) ligase (Coxiella burnetii (strain RSA 331 / Henzerling II)).